The primary structure comprises 244 residues: Mannose-binding protein C (244 aa).

Positions 1 to 18 (MSIFTSFLLLCVVTVVYA) are cleaved as a signal peptide. The Collagen-like domain occupies 38–96 (GLNGFPGKDGRDGAKGEKGEPGQGLRGLQGPPGKVGPTGPPGNPGLKGAVGPKGDRGDR). The segment at 40 to 101 (NGFPGKDGRD…DRGDRAEFDT (62 aa)) is disordered. Pro43 bears the 4-hydroxyproline mark. Positions 45–57 (KDGRDGAKGEKGE) are enriched in basic and acidic residues. 4-hydroxyproline is present on residues Pro58, Pro69, Pro78, and Pro81. Over residues 65–74 (LQGPPGKVGP) the composition is skewed to low complexity. Residues 90-99 (KGDRGDRAEF) show a composition bias toward basic and acidic residues. Positions 108 to 126 (IAALRSELRALRNWVLFSL) form a coiled coil. One can recognise a C-type lectin domain in the interval 129–241 (KVGKKYFVSS…CSDSFLAICE (113 aa)). Cystine bridges form between Cys151-Cys240 and Cys218-Cys232. The N-linked (GlcNAc...) asparagine glycan is linked to Asn210.

Oligomeric complex of 3 or more homotrimers. Interacts with MASP1 and MASP2. Interacts with MEP1A and MEP1B and may inhibit their catalytic activity. In terms of processing, hydroxylation on proline residues within the sequence motif, GXPG, is most likely to be 4-hydroxy as this fits the requirement for 4-hydroxylation in vertebrates.

The protein resides in the secreted. Its function is as follows. Calcium-dependent lectin involved in innate immune defense. Binds mannose, fucose and N-acetylglucosamine on different microorganisms and activates the lectin complement pathway. Binds to late apoptotic cells, as well as to apoptotic blebs and to necrotic cells, but not to early apoptotic cells, facilitating their uptake by macrophages. The protein is Mannose-binding protein C (Mbl2) of Mus musculus (Mouse).